The sequence spans 89 residues: MSITAERKQELIAEYATKENDTGSPEVQVAILTERINNLTDHLRGHNKDHHSRRGLLKMVGLRRRLLSYVQKEDRSRYQDLIKRLGLRK.

It belongs to the universal ribosomal protein uS15 family. Part of the 30S ribosomal subunit. Forms a bridge to the 50S subunit in the 70S ribosome, contacting the 23S rRNA.

In terms of biological role, one of the primary rRNA binding proteins, it binds directly to 16S rRNA where it helps nucleate assembly of the platform of the 30S subunit by binding and bridging several RNA helices of the 16S rRNA. Functionally, forms an intersubunit bridge (bridge B4) with the 23S rRNA of the 50S subunit in the ribosome. The sequence is that of Small ribosomal subunit protein uS15 from Magnetococcus marinus (strain ATCC BAA-1437 / JCM 17883 / MC-1).